The primary structure comprises 65 residues: Large ribosomal subunit protein bL35 (65 aa).

The protein belongs to the bacterial ribosomal protein bL35 family.

This Neisseria meningitidis serogroup A / serotype 4A (strain DSM 15465 / Z2491) protein is Large ribosomal subunit protein bL35.